The sequence spans 324 residues: Tetrahydromethanopterin:alpha-L-glutamate ligase (324 aa).

Residues 113-321 (SYLLARAGLP…PAEYILEYLQ (209 aa)) enclose the ATP-grasp domain. ATP contacts are provided by residues K148, 195-204 (QEFIENPGRD), and R220. D265 contributes to the Mg(2+) binding site. Mn(2+) is bound at residue D265. Positions 274–293 (TGNENKKTEDKSTGQGSRIL) are disordered. The Mg(2+) site is built by E294 and N296. Mn(2+) is bound by residues E294 and N296.

It belongs to the RimK family. MptN subfamily. As to quaternary structure, homodimer. Requires Mg(2+) as cofactor. It depends on Mn(2+) as a cofactor.

It carries out the reaction 5,6,7,8-tetrahydromethanopterin + L-glutamate + ATP = 5,6,7,8-tetrahydrosarcinapterin + ADP + phosphate + H(+). It functions in the pathway cofactor biosynthesis; 5,6,7,8-tetrahydrosarcinapterin biosynthesis. In terms of biological role, catalyzes the ATP or GTP-dependent addition of one L-glutamate molecule to tetrahydromethanopterin, producing tetrahydrosarcinapterin. This chain is Tetrahydromethanopterin:alpha-L-glutamate ligase (mptN), found in Methanosarcina acetivorans (strain ATCC 35395 / DSM 2834 / JCM 12185 / C2A).